An 85-amino-acid polypeptide reads, in one-letter code: Small ribosomal subunit protein bS16 (85 aa).

The protein belongs to the bacterial ribosomal protein bS16 family.

The polypeptide is Small ribosomal subunit protein bS16 (Clostridium novyi (strain NT)).